A 93-amino-acid polypeptide reads, in one-letter code: Large ribosomal subunit protein uL23cz/uL23cy (93 aa).

The protein belongs to the universal ribosomal protein uL23 family. As to quaternary structure, part of the 50S ribosomal subunit.

The protein resides in the plastid. It is found in the chloroplast. In terms of biological role, binds to 23S rRNA. The polypeptide is Large ribosomal subunit protein uL23cz/uL23cy (rpl23-A) (Eucalyptus globulus subsp. globulus (Tasmanian blue gum)).